Here is a 226-residue protein sequence, read N- to C-terminus: 7-carboxy-7-deazaguanine synthase (226 aa).

Residues 10–12 (LQG) and R25 contribute to the substrate site. The region spanning 16 to 221 (YTGIPCIFVR…LQTHKFIWTP (206 aa)) is the Radical SAM core domain. Residues C29, C33, and C36 each coordinate [4Fe-4S] cluster. S38 lines the Mg(2+) pocket. T69 contacts substrate. G71 is an S-adenosyl-L-methionine binding site.

This sequence belongs to the radical SAM superfamily. 7-carboxy-7-deazaguanine synthase family. Homodimer. Requires [4Fe-4S] cluster as cofactor. S-adenosyl-L-methionine serves as cofactor. It depends on Mg(2+) as a cofactor.

The enzyme catalyses 6-carboxy-5,6,7,8-tetrahydropterin + H(+) = 7-carboxy-7-deazaguanine + NH4(+). The protein operates within purine metabolism; 7-cyano-7-deazaguanine biosynthesis. Its function is as follows. Catalyzes the complex heterocyclic radical-mediated conversion of 6-carboxy-5,6,7,8-tetrahydropterin (CPH4) to 7-carboxy-7-deazaguanine (CDG), a step common to the biosynthetic pathways of all 7-deazapurine-containing compounds. The protein is 7-carboxy-7-deazaguanine synthase of Koribacter versatilis (strain Ellin345).